Here is a 321-residue protein sequence, read N- to C-terminus: Leucine-rich repeat-containing protein 46 (321 aa).

LRR repeat units follow at residues 45-66 (ELQT…EGLK), 67-88 (NLHS…ACVP), 89-110 (SLRF…LDLP), and 111-132 (CLQF…EFPQ). The region spanning 142-184 (NSCTNQDSYRELVIEALPLLLDLDGQPVMERWISDEEDEASSE) is the LRRCT domain. Phosphoserine is present on residues Ser175 and Ser182. Residues 198 to 222 (RGFLKELEQELSRHREHRQQAALTQ) are a coiled coil. The segment at 235 to 321 (NLPLLPGVPM…TKTMAKRSKK (87 aa)) is disordered.

The protein resides in the cell projection. The protein localises to the cilium. It localises to the flagellum. Functionally, required for normal spermatogenesis and male fertility. Plays an important role in sperm flagellum biogenesis. The protein is Leucine-rich repeat-containing protein 46 (LRRC46) of Macaca fascicularis (Crab-eating macaque).